An 822-amino-acid polypeptide reads, in one-letter code: MDGALFPHKPPYPIQSKRPPPSQSSNQSIKFSSATLHLPPPSPPSFPLDSLLHHLVHLSSPPPRHSNSAAARFPSLEVSTDSSSSKPILGIEIENERNGSLKLLCKKEVVLVNSIVEQPLTGLSRFFDSVKSELLRTDLVSLVKGLDDSGHWERAVFLFEWLVLSSNSGALKLDHQVIEIFVRILGRESQYSVAAKLLDKIPLQEYLLDVRAYTTILHAYSRTGKYEKAIDLFERMKEMGPSPTLVTYNVILDVFGKMGRSWRKILGVLDEMRSKGLKFDEFTCSTVLSACAREGLLREAKEFFAELKSCGYEPGTVTYNALLQVFGKAGVYTEALSVLKEMEENSCPADSVTYNELVAAYVRAGFSKEAAGVIEMMTKKGVMPNAITYTTVIDAYGKAGKEDEALKLFYSMKEAGCVPNTCTYNAVLSLLGKKSRSNEMIKMLCDMKSNGCSPNRATWNTMLALCGNKGMDKFVNRVFREMKSCGFEPDRDTFNTLISAYGRCGSEVDASKMYGEMTRAGFNACVTTYNALLNALARKGDWRSGENVISDMKSKGFKPTETSYSLMLQCYAKGGNYLGIERIENRIKEGQIFPSWMLLRTLLLANFKCRALAGSERAFTLFKKHGYKPDMVIFNSMLSIFTRNNMYDQAEGILESIREDGLSPDLVTYNSLMDMYVRRGECWKAEEILKTLEKSQLKPDLVSYNTVIKGFCRRGLMQEAVRMLSEMTERGIRPCIFTYNTFVSGYTAMGMFAEIEDVIECMAKNDCRPNELTFKMVVDGYCRAGKYSEAMDFVSKIKTFDPCFDDQSIQRLALRVRENLES.

The tract at residues methionine 1–serine 42 is disordered. Residues methionine 1–glutamate 77 constitute a chloroplast transit peptide. Residues histidine 8–serine 22 are compositionally biased toward pro residues. A compositionally biased stretch (low complexity) spans glutamine 23–histidine 37. PPR repeat units lie at residues aspartate 209–proline 243, threonine 244–phenylalanine 279, aspartate 280–proline 314, glycine 315–alanine 349, aspartate 350–proline 384, asparagine 385–proline 419, asparagine 420–proline 454, asparagine 455–proline 489, aspartate 490–alanine 524, cysteine 525–proline 559, threonine 560–proline 594, serine 595–proline 629, aspartate 630–proline 664, aspartate 665–proline 699, aspartate 700–proline 734, cysteine 735–proline 769, and asparagine 770–phenylalanine 800.

It belongs to the PPR family. P subfamily.

The protein localises to the plastid. It localises to the chloroplast. In Arabidopsis thaliana (Mouse-ear cress), this protein is Pentatricopeptide repeat-containing protein At2g18940, chloroplastic.